The chain runs to 323 residues: Probable cell division protein WhiA (323 aa).

Positions 279-313 form a DNA-binding region, H-T-H motif; that stretch reads TLKELGEMVSGGKISKSGINHRLRKLDEIAERLRA.

Belongs to the WhiA family.

In terms of biological role, involved in cell division and chromosome segregation. In Anoxybacillus flavithermus (strain DSM 21510 / WK1), this protein is Probable cell division protein WhiA.